The following is a 486-amino-acid chain: Cardiolipin synthase A (486 aa).

The next 2 membrane-spanning stretches (helical) occupy residues 3–23 (TFYT…IAGV) and 38–58 (MAWL…YLSF). PLD phosphodiesterase domains are found at residues 219 to 246 (MDLR…VDPR) and 399 to 426 (EGGL…DMRS). Active-site residues include His224, Lys226, Asp231, His404, Lys406, and Asp411.

The protein belongs to the phospholipase D family. Cardiolipin synthase subfamily. ClsA sub-subfamily.

It is found in the cell inner membrane. The enzyme catalyses 2 a 1,2-diacyl-sn-glycero-3-phospho-(1'-sn-glycerol) = a cardiolipin + glycerol. In terms of biological role, catalyzes the reversible phosphatidyl group transfer from one phosphatidylglycerol molecule to another to form cardiolipin (CL) (diphosphatidylglycerol) and glycerol. In Yersinia pseudotuberculosis serotype O:1b (strain IP 31758), this protein is Cardiolipin synthase A.